We begin with the raw amino-acid sequence, 379 residues long: Carboxypeptidase Y-deficient protein 8 (379 aa).

The segment covering 84 to 107 has biased composition (low complexity); sequence HGSGNSSSKKVTSSTSSSSSNGSV. Positions 84–108 are disordered; sequence HGSGNSSSKKVTSSTSSSSSNGSVD. A Phosphoserine modification is found at serine 216.

This sequence belongs to the VPS26 family. As to quaternary structure, component of the retromer complex which consists of VPS29, VPS26, VPS35, VPS5 and VPS17. Component of a retromer subcomplex consisting of VPS29, VPS26 and VPS35.

Plays a role in vesicular protein sorting. Required for the endosome-to-Golgi retrieval of the vacuolar protein sorting receptor VPS10. Component of the membrane-associated retromer complex which is essential in endosome-to-Golgi retrograde transport. The VPS29-VPS26-VPS35 subcomplex may be involved in cargo selection. The polypeptide is Carboxypeptidase Y-deficient protein 8 (PEP8) (Saccharomyces cerevisiae (strain ATCC 204508 / S288c) (Baker's yeast)).